The sequence spans 400 residues: Phosphoglycerate kinase (400 aa).

Residues 22–24 (DFN), Arg-38, 61–64 (HLGR), Arg-119, and Arg-152 contribute to the substrate site. Residues Lys-205, Gly-296, Glu-327, and 353–356 (GGDT) each bind ATP.

This sequence belongs to the phosphoglycerate kinase family. Monomer.

It localises to the cytoplasm. The enzyme catalyses (2R)-3-phosphoglycerate + ATP = (2R)-3-phospho-glyceroyl phosphate + ADP. Its pathway is carbohydrate degradation; glycolysis; pyruvate from D-glyceraldehyde 3-phosphate: step 2/5. This Campylobacter lari (strain RM2100 / D67 / ATCC BAA-1060) protein is Phosphoglycerate kinase.